The chain runs to 226 residues: Glutathione peroxidase 3 (226 aa).

An N-terminal signal peptide occupies residues 1-24 (MARILRASCLLSLLLAGFVPPGRG). Sec-73 is an active-site residue. Sec-73 is a non-standard amino acid (selenocysteine).

It belongs to the glutathione peroxidase family. Homotetramer. In terms of tissue distribution, secreted in plasma.

The protein localises to the secreted. The enzyme catalyses 2 glutathione + H2O2 = glutathione disulfide + 2 H2O. It carries out the reaction tert-butyl hydroperoxide + 2 glutathione = tert-butanol + glutathione disulfide + H2O. In terms of biological role, protects cells and enzymes from oxidative damage, by catalyzing the reduction of hydrogen peroxide, lipid peroxides and organic hydroperoxide, by glutathione. This is Glutathione peroxidase 3 from Mus musculus (Mouse).